The following is a 471-amino-acid chain: Eukaryotic translation initiation factor 3 subunit L (471 aa).

Residues 252–446 (DAIRMFSHIL…DLDYAMQGDL (195 aa)) form the PCI domain.

Belongs to the eIF-3 subunit L family.

Its subcellular location is the cytoplasm. Functionally, component of the eukaryotic translation initiation factor 3 (eIF-3) complex, which is involved in protein synthesis of a specialized repertoire of mRNAs and, together with other initiation factors, stimulates binding of mRNA and methionyl-tRNAi to the 40S ribosome. The eIF-3 complex specifically targets and initiates translation of a subset of mRNAs involved in cell proliferation. The sequence is that of Eukaryotic translation initiation factor 3 subunit L from Pyricularia oryzae (strain Y34) (Rice blast fungus).